Here is a 527-residue protein sequence, read N- to C-terminus: Eukaryotic translation initiation factor 2 subunit gamma (527 aa).

The disordered stretch occupies residues 1-83; that stretch reads MSDLQDQEPS…GLPEQPLNPD (83 aa). A Phosphothreonine modification is found at Thr60. One can recognise a tr-type G domain in the interval 98–307; that stretch reads QATINIGTIG…IVKTIPVPPR (210 aa). The G1 stretch occupies residues 107–114; the sequence is GHVAHGKS. Residue 110–115 coordinates GTP; that stretch reads AHGKST. Positions 135-139 are G2; sequence NITIK. A G3 region spans residues 193–196; sequence DCPG. Position 249–252 (249–252) interacts with GTP; it reads NKVD. The tract at residues 249–252 is G4; the sequence is NKVD. Position 258 is a phosphoserine (Ser258). 284–286 serves as a coordination point for GTP; sequence SAQ. Residues 284-286 form a G5 region; sequence SAQ. The interacts with CDC123 stretch occupies residues 515 to 527; the sequence is ATIKKGTTLEPIA.

It belongs to the TRAFAC class translation factor GTPase superfamily. Classic translation factor GTPase family. EIF2G subfamily. Eukaryotic translation initiation factor 2 eIF2 is a heterotrimeric complex composed of an alpha, a beta and a gamma subunit. The factors eIF-1, eIF-1A, eIF-2, eIF-3, TIF5/eIF-5 and methionyl-tRNAi form a multifactor complex (MFC) that may bind to the 40S ribosome. Interacts (via C-terminus) with CDC123; the interaction is direct. Interacts with GCD1. Interacts with the eIF2B complex subunits GCD6 and GCD7. Interacts with methionyl-initiator methionine tRNA.

It localises to the cytoplasm. The protein resides in the cytosol. It carries out the reaction GTP + H2O = GDP + phosphate + H(+). Functionally, as a subunit of eukaryotic initiation factor 2 eIF2, involved in the early steps of protein synthesis. In the presence of GTP, eIF-2 forms a ternary complex with initiator tRNA Met-tRNAi and then recruits the 40S ribosomal complex and initiation factors eIF-1, eIF-1A and eIF-3 to form the 43S pre-initiation complex (43S PIC), a step that determines the rate of protein translation. The 43S PIC binds to mRNA and scans downstream to the initiation codon, where it forms a 48S initiation complex by codon-anticodon base pairing. This leads to the displacement of eIF-1 to allow GTPase-activating protein (GAP) eIF-5-mediated hydrolysis of eIF2-bound GTP. Hydrolysis of GTP and release of Pi, which makes GTP hydrolysis irreversible, causes the release of the eIF-2-GDP binary complex from the 40S subunit, an event that is essential for the subsequent joining of the 60S ribosomal subunit to form an elongation-competent 80S ribosome. In order for eIF-2 to recycle and catalyze another round of initiation, the GDP bound to eIF-2 must be exchanged with GTP by way of a reaction catalyzed by GDP-GTP exchange factor (GEF) eIF-2B. This chain is Eukaryotic translation initiation factor 2 subunit gamma (GCD11), found in Saccharomyces cerevisiae (strain ATCC 204508 / S288c) (Baker's yeast).